The primary structure comprises 381 residues: Curved DNA-binding protein (381 aa).

Ser8 is modified (phosphoserine). Thr362 bears the Phosphothreonine mark. Positions 368–375 (KNKKKSKK) match the Nuclear localization signal motif.

It belongs to the peptidase M24 family.

The protein localises to the nucleus. In terms of biological role, a non-essential protein that preferentially binds curved DNA. Binds non-curved DNA with a much lower affinity. This is Curved DNA-binding protein (cdb4) from Schizosaccharomyces pombe (strain 972 / ATCC 24843) (Fission yeast).